A 234-amino-acid polypeptide reads, in one-letter code: 2-C-methyl-D-erythritol 4-phosphate cytidylyltransferase (234 aa).

This sequence belongs to the IspD/TarI cytidylyltransferase family. IspD subfamily.

It catalyses the reaction 2-C-methyl-D-erythritol 4-phosphate + CTP + H(+) = 4-CDP-2-C-methyl-D-erythritol + diphosphate. It participates in isoprenoid biosynthesis; isopentenyl diphosphate biosynthesis via DXP pathway; isopentenyl diphosphate from 1-deoxy-D-xylulose 5-phosphate: step 2/6. Functionally, catalyzes the formation of 4-diphosphocytidyl-2-C-methyl-D-erythritol from CTP and 2-C-methyl-D-erythritol 4-phosphate (MEP). This Syntrophus aciditrophicus (strain SB) protein is 2-C-methyl-D-erythritol 4-phosphate cytidylyltransferase.